The primary structure comprises 431 residues: Enolase (431 aa).

Q167 is a binding site for (2R)-2-phosphoglycerate. The active-site Proton donor is E209. The Mg(2+) site is built by D246, E289, and D316. Positions 341, 370, 371, and 392 each coordinate (2R)-2-phosphoglycerate. Catalysis depends on K341, which acts as the Proton acceptor.

It belongs to the enolase family. Component of the RNA degradosome, a multiprotein complex involved in RNA processing and mRNA degradation. Requires Mg(2+) as cofactor.

It is found in the cytoplasm. Its subcellular location is the secreted. It localises to the cell surface. The enzyme catalyses (2R)-2-phosphoglycerate = phosphoenolpyruvate + H2O. It functions in the pathway carbohydrate degradation; glycolysis; pyruvate from D-glyceraldehyde 3-phosphate: step 4/5. Catalyzes the reversible conversion of 2-phosphoglycerate (2-PG) into phosphoenolpyruvate (PEP). It is essential for the degradation of carbohydrates via glycolysis. The polypeptide is Enolase (Shewanella denitrificans (strain OS217 / ATCC BAA-1090 / DSM 15013)).